The sequence spans 265 residues: Speedy protein E13 (265 aa).

The tract at residues 1–80 is disordered; it reads MGQILGKIMM…EPEKELAPEP (80 aa). Residues 66-80 are compositionally biased toward acidic residues; that stretch reads DESDDEPEKELAPEP.

This sequence belongs to the Speedy/Ringo family.

This chain is Speedy protein E13, found in Homo sapiens (Human).